The sequence spans 227 residues: (S)-2-haloacid dehalogenase (227 aa).

The active-site Nucleophile is the Asp-10. An (S)-2-haloacid is bound by residues Leu-11–Tyr-12, Arg-41, and Ser-118–Asn-119. Residues Ser-175–Asp-180 form an important for catalytic activity region.

Belongs to the HAD-like hydrolase superfamily. S-2-haloalkanoic acid dehalogenase family. In terms of assembly, homotetramer.

It catalyses the reaction an (S)-2-haloacid + H2O = a (2R)-2-hydroxycarboxylate + a halide anion + H(+). It carries out the reaction (S)-2-chloropropanoate + H2O = (R)-lactate + chloride + H(+). Functionally, catalyzes the hydrolytic dehalogenation of small (S)-2-haloalkanoic acids to yield the corresponding (R)-2-hydroxyalkanoic acids. Acts on acids of short chain lengths, C(2) to C(4), with inversion of configuration at C-2. Active with 2-halogenated carboxylic acids and converts only the S-isomer (or L-isomer) of 2-chloropropionic acid with inversion of configuration to produce R-lactate (or D-isomer). This Pseudomonas putida (Arthrobacter siderocapsulatus) protein is (S)-2-haloacid dehalogenase.